We begin with the raw amino-acid sequence, 344 residues long: GTPase Obg (344 aa).

The span at 1 to 12 (MFVDSASFSVSS) shows a compositional bias: polar residues. The segment at 1–36 (MFVDSASFSVSSGKGGPGCASFRREKHVPLGGPDGG) is disordered. The Obg domain maps to 1–158 (MFVDSASFSV…RNIRLELKLI (158 aa)). The OBG-type G domain occupies 159-341 (ADVGLVGFPN…LKFGLLEILK (183 aa)). GTP contacts are provided by residues 165–172 (GFPNVGKS), 190–194 (FTTLT), 212–215 (DIPG), 280–283 (TRLD), and 322–324 (SSV). The Mg(2+) site is built by Ser-172 and Thr-192.

This sequence belongs to the TRAFAC class OBG-HflX-like GTPase superfamily. OBG GTPase family. In terms of assembly, monomer. It depends on Mg(2+) as a cofactor.

Its subcellular location is the cytoplasm. In terms of biological role, an essential GTPase which binds GTP, GDP and possibly (p)ppGpp with moderate affinity, with high nucleotide exchange rates and a fairly low GTP hydrolysis rate. Plays a role in control of the cell cycle, stress response, ribosome biogenesis and in those bacteria that undergo differentiation, in morphogenesis control. The chain is GTPase Obg from Campylobacter fetus subsp. fetus (strain 82-40).